We begin with the raw amino-acid sequence, 220 residues long: Large ribosomal subunit protein uL6c (220 aa).

Residues 1–38 constitute a chloroplast transit peptide; that stretch reads MSLPLPSHMKSVFLGMKVEISTSVPVTRIGFWRKSVDC.

In terms of assembly, component of the chloroplast large ribosomal subunit (LSU). Mature 70S chloroplast ribosomes of higher plants consist of a small (30S) and a large (50S) subunit. The 30S small subunit contains 1 molecule of ribosomal RNA (16S rRNA) and 24 different proteins. The 50S large subunit contains 3 rRNA molecules (23S, 5S and 4.5S rRNA) and 33 different proteins.

It localises to the plastid. It is found in the chloroplast. Component of the chloroplast ribosome (chloro-ribosome), a dedicated translation machinery responsible for the synthesis of chloroplast genome-encoded proteins, including proteins of the transcription and translation machinery and components of the photosynthetic apparatus. This Spinacia oleracea (Spinach) protein is Large ribosomal subunit protein uL6c (RPL6).